Consider the following 1148-residue polypeptide: Maintenance of telomere capping protein 5 (1148 aa).

5 WD repeats span residues 63 to 106, 112 to 152, 156 to 195, 199 to 239, and 299 to 348; these read HHIT…SNAI, GHSR…RPFY, SWRS…TPLC, GHVS…TESK, and GHSD…YGKV. The RWD domain occupies 432–543; the sequence is EEVSAIGHKF…RFVLGEKVSL (112 aa). Phosphoserine is present on Ser-759. The tract at residues 963-990 is disordered; that stretch reads THNTLNGSSKFTEPAQKQGSRAISSSPF. Polar residues predominate over residues 964-990; it reads HNTLNGSSKFTEPAQKQGSRAISSSPF.

This sequence belongs to the WD repeat WDR59 family. Component of the SEA complex composed of at least IML1/SEA1, RTC1/SEA2, MTC5/SEA3, NPR2, NPR3, SEA4, SEC13 and SEH1.

It localises to the vacuole membrane. In terms of biological role, component of the SEA complex which coats the vacuolar membrane and is involved in intracellular trafficking, autophagy, response to nitrogen starvation, and amino acid biogenesis. May be involved in telomere capping. This chain is Maintenance of telomere capping protein 5 (MTC5), found in Saccharomyces cerevisiae (strain ATCC 204508 / S288c) (Baker's yeast).